The chain runs to 953 residues: Pyruvate, phosphate dikinase, chloroplastic (953 aa).

The N-terminal 77 residues, 1–77 (MMSSLSVEGM…VLNPVSPPVT (77 aa)), are a transit peptide targeting the chloroplast. A disordered region spans residues 55 to 74 (PELRSSGLTPPRAVLNPVSP). Phosphothreonine; by PDRP1 is present on T533. The Tele-phosphohistidine intermediate role is filled by H535. R641, R698, E827, G848, T849, N850, and D851 together coordinate substrate. E827 contributes to the Mg(2+) binding site. D851 is a binding site for Mg(2+). Catalysis depends on C913, which acts as the Proton donor.

This sequence belongs to the PEP-utilizing enzyme family. As to quaternary structure, homotetramer. The cofactor is Mg(2+). Post-translationally, phosphorylation of Thr-533 in the dark inactivates the enzyme. Dephosphorylation upon light stimulation reactivates the enzyme. As to expression, isoform 1 mainly localized in mesophyll cells and only a low level is found in bundle sheath cells. Isoform 2 is expressed in roots and stems.

It localises to the plastid. The protein resides in the chloroplast. Its subcellular location is the cytoplasm. The enzyme catalyses pyruvate + phosphate + ATP = phosphoenolpyruvate + AMP + diphosphate + H(+). The protein operates within photosynthesis; C4 acid pathway. Its activity is regulated as follows. Activated by light-induced dephosphorylation. Inhibited by dark-induced phosphorylation. Both reactions are catalyzed by PDRP1. Functionally, formation of phosphoenolpyruvate, which is the primary acceptor of CO(2) in C4 and some Crassulacean acid metabolism plants. The chain is Pyruvate, phosphate dikinase, chloroplastic (PPDK) from Flaveria trinervia (Clustered yellowtops).